A 375-amino-acid polypeptide reads, in one-letter code: Probable neutral protease 2 homolog ARB_05817 (375 aa).

Residues 1 to 19 (MQVIVALAALGSLAAPALG) form the signal peptide. The propeptide occupies 20 to 189 (FSIPRGVPVS…RGPLTRINKR (170 aa)). Disulfide bonds link C197–C267 and C274–C292. H317 contacts Zn(2+). E318 is an active-site residue. Zn(2+)-binding residues include H321 and D332.

This sequence belongs to the peptidase M35 family. It depends on Zn(2+) as a cofactor.

It localises to the secreted. The catalysed reaction is Preferential cleavage of bonds with hydrophobic residues in P1'. Also 3-Asn-|-Gln-4 and 8-Gly-|-Ser-9 bonds in insulin B chain.. In terms of biological role, probable secreted metalloprotease that shows high activities on basic nuclear substrates such as histone and protamine. May be involved in virulence. The sequence is that of Probable neutral protease 2 homolog ARB_05817 from Arthroderma benhamiae (strain ATCC MYA-4681 / CBS 112371) (Trichophyton mentagrophytes).